The primary structure comprises 152 residues: MFRGASAVNLDSKGRIAIPTRYRPEILEINQGQMVCTVDIRQSCLLLYPLNQWEIIEQKLSKLSNFNPEERSLQRVMLGYATECELDSAGRILISAPLRQHAKLEKSIMLVGQLNKFEIWSESEWQAQIEKDMTLGASGQFAMSEALSMLSL.

SpoVT-AbrB domains are found at residues 5 to 52 and 81 to 124; these read ASAV…PLNQ and ATEC…SESE.

Belongs to the MraZ family. In terms of assembly, forms oligomers.

The protein resides in the cytoplasm. It is found in the nucleoid. The polypeptide is Transcriptional regulator MraZ (Histophilus somni (strain 129Pt) (Haemophilus somnus)).